The primary structure comprises 180 residues: ATP synthase subunit delta (180 aa).

This sequence belongs to the ATPase delta chain family. In terms of assembly, F-type ATPases have 2 components, F(1) - the catalytic core - and F(0) - the membrane proton channel. F(1) has five subunits: alpha(3), beta(3), gamma(1), delta(1), epsilon(1). CF(0) has four main subunits: a(1), b(1), b'(1) and c(10-14). The alpha and beta chains form an alternating ring which encloses part of the gamma chain. F(1) is attached to F(0) by a central stalk formed by the gamma and epsilon chains, while a peripheral stalk is formed by the delta, b and b' chains.

It is found in the cellular thylakoid membrane. F(1)F(0) ATP synthase produces ATP from ADP in the presence of a proton or sodium gradient. F-type ATPases consist of two structural domains, F(1) containing the extramembraneous catalytic core and F(0) containing the membrane proton channel, linked together by a central stalk and a peripheral stalk. During catalysis, ATP synthesis in the catalytic domain of F(1) is coupled via a rotary mechanism of the central stalk subunits to proton translocation. Its function is as follows. This protein is part of the stalk that links CF(0) to CF(1). It either transmits conformational changes from CF(0) to CF(1) or is implicated in proton conduction. This Prochlorococcus marinus (strain MIT 9301) protein is ATP synthase subunit delta.